Here is a 385-residue protein sequence, read N- to C-terminus: Mannitol-1-phosphate 5-dehydrogenase (385 aa).

3–14 (ALHFGAGNIGRG) contributes to the NAD(+) binding site.

The protein belongs to the mannitol dehydrogenase family.

The enzyme catalyses D-mannitol 1-phosphate + NAD(+) = beta-D-fructose 6-phosphate + NADH + H(+). This Pasteurella multocida (strain Pm70) protein is Mannitol-1-phosphate 5-dehydrogenase.